Reading from the N-terminus, the 873-residue chain is Zinc fingers and homeoboxes protein 1 (873 aa).

Residues 24-63 (LISDLDEGPPVLTPVENTRAESISSDEEVHESVDSDNQQN) form a disordered region. Phosphothreonine is present on Thr-36. A phosphoserine mark is found at Ser-45, Ser-47, and Ser-48. 2 C2H2-type zinc fingers span residues 70–93 (YECKYCTFQTPDLNMFTFHVDSEH) and 102–125 (YVCVECNFLTKRYDALSEHNLKYH). Lys-159 participates in a covalent cross-link: Glycyl lysine isopeptide (Lys-Gly) (interchain with G-Cter in SUMO2). Positions 198-236 (VHHNSVEDVPEEKENEIKPDREETVENPSSSASESNTST) are disordered. Ser-202 carries the phosphoserine modification. The span at 212-221 (NEIKPDREET) shows a compositional bias: basic and acidic residues. The segment covering 223-236 (ENPSSSASESNTST) has biased composition (low complexity). The segment at 272–432 (NSNLIPKVLI…QNNVQKSQVP (161 aa)) is required for dimerization. The segment at 272–564 (NSNLIPKVLI…VQPKQSWNPF (293 aa)) is required for interaction with NFYA. Positions 284 to 346 (NSIPTYNAAL…LKHGVSWTPE (63 aa)) form a DNA-binding region, homeobox 1. The segment at 431-454 (VPAAQPTAETKPATAAVPTSQSVK) is disordered. Glycyl lysine isopeptide (Lys-Gly) (interchain with G-Cter in SUMO2) cross-links involve residues Lys-441, Lys-454, and Lys-485. Residues 464–526 (SFGIRAKKTK…YNQRNSKSNQ (63 aa)) constitute a DNA-binding region (homeobox 2). Disordered stretches follow at residues 544–563 (DETTESPTVGTVQPKQSWNP), 626–668 (KEEK…CKKT), and 732–769 (SSMNGLSSLRKRGRGRPKGRGRGRPRGRPRGSKRINNW). Positions 550 to 562 (PTVGTVQPKQSWN) are enriched in polar residues. Residues 569–630 (PQKFKEKTAE…KSKALKEEKM (62 aa)) constitute a DNA-binding region (homeobox 3). A Glycyl lysine isopeptide (Lys-Gly) (interchain with G-Cter in SUMO2) cross-link involves residue Lys-629. Ser-648 is subject to Phosphoserine. Positions 660 to 722 (STGKICKKTP…YAWKNGNLKW (63 aa)) form a DNA-binding region, homeobox 4. Residues 734–768 (MNGLSSLRKRGRGRPKGRGRGRPRGRPRGSKRINN) form a required for nuclear localization region. Basic residues predominate over residues 740-764 (LRKRGRGRPKGRGRGRPRGRPRGSK). Ser-774 carries the phosphoserine modification. A DNA-binding region (homeobox 5) is located at residues 777–832 (KFKTGTAILKDYYLKHKFLNEQDLDELVNKSHMGYEQVREWFAERQRRSELGIELF). Residues 829-873 (IELFEENEEEDEVIDDQEEDEEETDDSDTWEPPRHVKRKLSKSDD) form a disordered region. Residues 831-857 (LFEENEEEDEVIDDQEEDEEETDDSDT) are compositionally biased toward acidic residues. The required for repressor activity stretch occupies residues 831–873 (LFEENEEEDEVIDDQEEDEEETDDSDTWEPPRHVKRKLSKSDD). Residues 863–873 (HVKRKLSKSDD) are compositionally biased toward basic residues.

It belongs to the ZHX family. Forms homodimers. Heterodimer (via HD1 domain) with ZHX2 (via HD1 domain). Also forms a heterodimer with ZHX3 which is a prerequisite for repressor activity. Interacts with ATF7IP and NFYA. Interacts (via homeobox domains) with DNMT3B (via PWWP domain).

It is found in the nucleus. In terms of biological role, acts as a transcriptional repressor. Increases DNMT3B-mediated repressive transcriptional activity when DNMT3B is tethered to DNA. May link molecule between DNMT3B and other co-repressor proteins. The sequence is that of Zinc fingers and homeoboxes protein 1 (ZHX1) from Pongo pygmaeus (Bornean orangutan).